The following is a 745-amino-acid chain: ATP-dependent zinc metalloprotease FtsH (745 aa).

The Cytoplasmic segment spans residues 1–11; that stretch reads MNNRRNGLFRN. Residues 12-32 form a helical membrane-spanning segment; that stretch reads SLFYILMFLSLMGIIYFFFGG. Topologically, residues 33–131 are extracellular; the sequence is NSGSQTQNIR…VTAKAEESSG (99 aa). A helical transmembrane segment spans residues 132–152; sequence IWVTLLMYIAPVILMLFLFYM. Topologically, residues 153 to 745 are cytoplasmic; sequence MMGQAGQGGG…SSQDDTNSQA (593 aa). 227-234 contributes to the ATP binding site; the sequence is GPPGTGKT. Position 449 (histidine 449) interacts with Zn(2+). The active site involves glutamate 450. Residues histidine 453 and aspartate 525 each coordinate Zn(2+). Residues 630 to 673 show a composition bias toward basic and acidic residues; sequence MPEKDSNEFPSEKAATFEESKRELERREAEKHAQNQSADDKQAD. The disordered stretch occupies residues 630–745; the sequence is MPEKDSNEFP…SSQDDTNSQA (116 aa). Positions 690–704 are enriched in low complexity; sequence SESDASSEVSADSSV. Residues 705-745 show a composition bias toward polar residues; sequence NSTANSATESATDSDVATSATGLPNAESATPSSQDDTNSQA.

The protein in the central section; belongs to the AAA ATPase family. It in the C-terminal section; belongs to the peptidase M41 family. As to quaternary structure, homohexamer. Requires Zn(2+) as cofactor.

It is found in the cell membrane. Its function is as follows. Acts as a processive, ATP-dependent zinc metallopeptidase for both cytoplasmic and membrane proteins. Plays a role in the quality control of integral membrane proteins. The sequence is that of ATP-dependent zinc metalloprotease FtsH from Lactiplantibacillus plantarum (strain ATCC BAA-793 / NCIMB 8826 / WCFS1) (Lactobacillus plantarum).